A 749-amino-acid polypeptide reads, in one-letter code: Replication restart protein PriA (749 aa).

The Helicase ATP-binding domain occupies 224 to 391 (SLKTSQFHTH…LSGKYVLSRL (168 aa)). 237–244 (GITGSGKT) serves as a coordination point for ATP. Residues 333–336 (DEEH) carry the DEAH box motif. Positions 454, 457, 463, 466, 481, 484, 495, and 498 each coordinate Zn(2+). The Helicase C-terminal domain maps to 490–658 (DLPQSCPKCL…EYPPFIRLIR (169 aa)).

Belongs to the helicase family. PriA subfamily. Component of the replication restart primosome. The cofactor is Zn(2+).

The enzyme catalyses Couples ATP hydrolysis with the unwinding of duplex DNA by translocating in the 3'-5' direction.. It catalyses the reaction ATP + H2O = ADP + phosphate + H(+). Initiates the restart of stalled replication forks, which reloads the replicative helicase on sites other than the origin of replication. Recognizes and binds to abandoned replication forks and remodels them to uncover a helicase loading site. Promotes assembly of the primosome at these replication forks. The polypeptide is Replication restart protein PriA (Chlamydia pneumoniae (Chlamydophila pneumoniae)).